The following is a 298-amino-acid chain: MARSPQGLLMLLLLHYLIVALDYHKANGFSASKDHRQEVTVIEFQEAILACKTPKKTTSSRLEWKKVGQGVSLVYYQQALQGDFKDRAEMIDFNIRIKNVTRSDAGEYRCEVSAPTEQGQNLQEDKVMLEVLVAPAVPACEVPTSVMTGSVVELRCQDKEGNPAPEYIWFKDGTSLLGNPKGGTHNNSSYTMNTKSGILQFNMISKMDSGEYYCEARNSVGHRRCPGKRMQVDVLNISGIIATVVVVAFVISVCGLGTCYAQRKGYFSKETSFQKGSPASKVTTMSENDFKHTKSFII.

A signal peptide spans 1–28; that stretch reads MARSPQGLLMLLLLHYLIVALDYHKANG. The Extracellular segment spans residues 29–236; the sequence is FSASKDHRQE…GKRMQVDVLN (208 aa). The Ig-like V-type domain maps to 32 to 128; the sequence is SKDHRQEVTV…GQNLQEDKVM (97 aa). Disulfide bonds link cysteine 51–cysteine 110 and cysteine 156–cysteine 214. Asparagine 99 is a glycosylation site (N-linked (GlcNAc...) asparagine). The Ig-like C2-type domain maps to 135–238; the sequence is PAVPACEVPT…RMQVDVLNIS (104 aa). A helical membrane pass occupies residues 237-257; it reads ISGIIATVVVVAFVISVCGLG. Residues 258–298 lie on the Cytoplasmic side of the membrane; it reads TCYAQRKGYFSKETSFQKGSPASKVTTMSENDFKHTKSFII.

Belongs to the immunoglobulin superfamily. In terms of processing, the expression in Sertoli cells is regulated by TGFB3 through ubiquitin-mediated proteasomal degradation. As to expression, expressed by bone marrow stromal cells (at protein level). Expressed in skin (at protein level). Expressed in testis by Sertoli cells (at protein level). Expressed by dorsal root ganglion and spinal cord neurons.

It localises to the cell membrane. The protein localises to the cell junction. The protein resides in the tight junction. Junctional adhesion protein that mediates heterotypic cell-cell interactions with its cognate receptor JAM3 to regulate different cellular processes. Plays a role in homing and mobilization of hematopoietic stem and progenitor cells within the bone marrow. At the surface of bone marrow stromal cells, it contributes to the retention of the hematopoietic stem and progenitor cells expressing JAM3. Plays a central role in leukocytes extravasation by facilitating not only transmigration but also tethering and rolling of leukocytes along the endothelium. Tethering and rolling of leukocytes are dependent on the binding by JAM2 of the integrin alpha-4/beta-1. Plays a role in spermatogenesis where JAM2 and JAM3, which are respectively expressed by Sertoli and germ cells, mediate an interaction between both cell types and play an essential role in the anchorage of germ cells onto Sertoli cells and the assembly of cell polarity complexes during spermatid differentiation. Also functions as an inhibitory somatodendritic cue that prevents the myelination of non-axonal parts of neurons. During myogenesis, it is involved in myocyte fusion. May also play a role in angiogenesis. The protein is Junctional adhesion molecule B of Mus musculus (Mouse).